Consider the following 455-residue polypeptide: Chromosomal replication initiator protein DnaA (455 aa).

The tract at residues 1–73 (MTISPQYIWN…LEEVETIVGY (73 aa)) is domain I, interacts with DnaA modulators. Residues 73–114 (YPIAVKLTTSQEQNLRIVDKNKDNLSSTKLQNKRQQESPKLN) are domain II. A domain III, AAA+ region region spans residues 115 to 331 (QLNPRYNFSR…GALIRAVTYI (217 aa)). Residues glycine 159, glycine 161, lysine 162, and threonine 163 each contribute to the ATP site. Residues 332-455 (SISGLSMTVE…RINIASRNQN (124 aa)) are domain IV, binds dsDNA.

The protein belongs to the DnaA family. Oligomerizes as a right-handed, spiral filament on DNA at oriC.

Its subcellular location is the cytoplasm. Plays an essential role in the initiation and regulation of chromosomal replication. ATP-DnaA binds to the origin of replication (oriC) to initiate formation of the DNA replication initiation complex once per cell cycle. Binds the DnaA box (a 9 base pair repeat at the origin) and separates the double-stranded (ds)DNA. Forms a right-handed helical filament on oriC DNA; dsDNA binds to the exterior of the filament while single-stranded (ss)DNA is stabiized in the filament's interior. The ATP-DnaA-oriC complex binds and stabilizes one strand of the AT-rich DNA unwinding element (DUE), permitting loading of DNA polymerase. After initiation quickly degrades to an ADP-DnaA complex that is not apt for DNA replication. Binds acidic phospholipids. The protein is Chromosomal replication initiator protein DnaA of Crocosphaera subtropica (strain ATCC 51142 / BH68) (Cyanothece sp. (strain ATCC 51142)).